We begin with the raw amino-acid sequence, 528 residues long: G protein-coupled receptor 161 (528 aa).

Topologically, residues 1–30 are extracellular; that stretch reads MSLNSSLGHRKELSNLTEGASDQGGSGVTE. 2 N-linked (GlcNAc...) asparagine glycosylation sites follow: N4 and N15. A helical membrane pass occupies residues 31–51; sequence FVAIVIITVFVCLGNLVIVIT. Residues 52 to 64 are Cytoplasmic-facing; it reads LYRKSYLLTLSNK. The helical transmembrane segment at 65–85 threads the bilayer; it reads FVFSLTLSNFLLSVLVLPFVV. The Extracellular portion of the chain corresponds to 86-101; sequence TSSIRREWIFGVVWCN. A disulfide bond links C100 and C178. A glycan (N-linked (GlcNAc...) asparagine) is linked at N101. A helical transmembrane segment spans residues 102–122; that stretch reads FSALLYLLISSASMLTLGIIA. Topologically, residues 123-143 are cytoplasmic; the sequence is VDRYYAVLYPMAYPMKITGNR. The chain crosses the membrane as a helical span at residues 144 to 164; the sequence is AVMVLAYIWLHSLIGCLPPLF. Over 165–190 the chain is Extracellular; the sequence is GWSSVEFDEFKWMCVAAWHREPGYTA. A helical transmembrane segment spans residues 191 to 211; the sequence is FWQIWCALLPFLVMLVCYGFI. The Cytoplasmic portion of the chain corresponds to 212–269; the sequence is FRVARVKARKVHCGAVVTVEVGVQRTGRKNSSTSTSSSGSRKSAFQGVVYSANQCKAL. The chain crosses the membrane as a helical span at residues 270 to 290; it reads VTILVVIGAFMVTWGPYMVVI. The Extracellular portion of the chain corresponds to 291–306; it reads TSEALWGKNCVSPTLE. A helical membrane pass occupies residues 307–327; it reads TWATWLSFTSAICHPLIYGLW. Topologically, residues 328-528 are cytoplasmic; that stretch reads NKTVRKELLG…EGDVLATEQR (201 aa).

Belongs to the G-protein coupled receptor 1 family.

It is found in the cell projection. The protein localises to the cilium membrane. Its subcellular location is the cell membrane. Functionally, key negative regulator of Shh signaling, which promotes the processing of GLI3 into GLI3R during neural tube development. Recruited by TULP3 and the IFT-A complex to primary cilia and acts as a regulator of the PKA-dependent basal repression machinery in Shh signaling by increasing cAMP levels, leading to promote the PKA-dependent processing of GLI3 into GLI3R and repress the Shh signaling. In presence of SHH, it is removed from primary cilia and is internalized into recycling endosomes, preventing its activity and allowing activation of the Shh signaling. Its ligand is unknown. In Bos taurus (Bovine), this protein is G protein-coupled receptor 161 (GPR161).